We begin with the raw amino-acid sequence, 221 residues long: Growth hormone-releasing peptides (221 aa).

The first 25 residues, 1-25 (MHLKIGTLTIRTIMLFTLCTFLTLF), serve as a signal peptide directing secretion. Residues 26–95 (AFSTCFDETK…QPENEFLQER (70 aa)) constitute a propeptide that is removed on maturation. F107 carries the post-translational modification Phenylalanine amide. The propeptide occupies 110-127 (TSDDKIAKSIPSFDKIAK). Phenylalanine amide is present on residues F136, F156, and F176. Positions 179-221 (TPHSDRLQYEMNSHPLELKNPEEDSDRKKRQAMTFRIRTDLQM) are excised as a propeptide.

Belongs to the FARP (FMRFamide related peptide) family. Observed in the suprachiasmatic nucleus and in several telencephalic and diencephalic regions.

The protein resides in the secreted. Functionally, primary role is to release GH from the pituitary. May act as an endogenous ligand in the bullfrog hypothalamo-hypophysial system. This chain is Growth hormone-releasing peptides, found in Aquarana catesbeiana (American bullfrog).